A 539-amino-acid polypeptide reads, in one-letter code: Keratin, type II cytoskeletal 73 (539 aa).

Residues 1-130 are head; that stretch reads MNRQFTCKPG…DPEIQKVRAQ (130 aa). Residues 131-166 are coil 1A; it reads EREQIKALNNKFASFIDKVRFLEQQNQVLQTKWELL. Residues 131 to 444 form the IF rod domain; the sequence is EREQIKALNN…KLLEGEECRM (314 aa). Residues 167-185 are linker 1; it reads QQLDLSNCRRNLEPVYEAH. Residues 186–277 are coil 1B; that stretch reads ISSLQKQLDS…CLYEGEITQM (92 aa). Positions 278–301 are linker 12; it reads QSHISDTSVVLSMDNNRNLDLDSI. The segment at 302–440 is coil 2; that stretch reads IAEVRAQYED…ATYRKLLEGE (139 aa). Residues 441 to 539 form a tail region; that stretch reads ECRMSGEHTS…LGSPSKKTMR (99 aa).

This sequence belongs to the intermediate filament family. As to quaternary structure, heterotetramer of two type I and two type II keratins.

Has a role in hair formation. Specific component of keratin intermediate filaments in the inner root sheath (IRS) of the hair follicle. In Mus musculus (Mouse), this protein is Keratin, type II cytoskeletal 73 (Krt73).